We begin with the raw amino-acid sequence, 198 residues long: Glycerol-3-phosphate acyltransferase (198 aa).

A run of 5 helical transmembrane segments spans residues 2–22, 53–73, 79–99, 113–133, and 152–172; these read IIDLIWIITSYVIGSIPFGVL, LGFITLFFDVLKGFFPVVIAT, PFMYTMTGLAAIIGHLYSCFL, VLIPIAFWQLLFAAILCTFFI, and IILFITGKFAYIPLSLIIMAL.

The protein belongs to the PlsY family. As to quaternary structure, probably interacts with PlsX.

It is found in the cell membrane. It catalyses the reaction an acyl phosphate + sn-glycerol 3-phosphate = a 1-acyl-sn-glycero-3-phosphate + phosphate. It functions in the pathway lipid metabolism; phospholipid metabolism. Catalyzes the transfer of an acyl group from acyl-phosphate (acyl-PO(4)) to glycerol-3-phosphate (G3P) to form lysophosphatidic acid (LPA). This enzyme utilizes acyl-phosphate as fatty acyl donor, but not acyl-CoA or acyl-ACP. The chain is Glycerol-3-phosphate acyltransferase from Lawsonia intracellularis (strain PHE/MN1-00).